Consider the following 320-residue polypeptide: Phospho-N-acetylmuramoyl-pentapeptide-transferase (320 aa).

10 helical membrane passes run 6–26 (FLTP…LFIG), 54–74 (MGGL…AIWL), 81–101 (LWIA…DDFI), 117–137 (LAGQ…EGFS), 145–165 (IGTI…LVGF), 175–195 (IDGL…IIAF), 200–220 (IDVA…LIFN), 226–246 (IFMG…MSIL), 251–271 (FSLL…MLQV), and 300–320 (RIDI…LLIF).

The protein belongs to the glycosyltransferase 4 family. MraY subfamily. It depends on Mg(2+) as a cofactor.

Its subcellular location is the cell membrane. The enzyme catalyses UDP-N-acetyl-alpha-D-muramoyl-L-alanyl-gamma-D-glutamyl-L-lysyl-D-alanyl-D-alanine + di-trans,octa-cis-undecaprenyl phosphate = Mur2Ac(oyl-L-Ala-gamma-D-Glu-L-Lys-D-Ala-D-Ala)-di-trans,octa-cis-undecaprenyl diphosphate + UMP. Its pathway is cell wall biogenesis; peptidoglycan biosynthesis. Catalyzes the initial step of the lipid cycle reactions in the biosynthesis of the cell wall peptidoglycan: transfers peptidoglycan precursor phospho-MurNAc-pentapeptide from UDP-MurNAc-pentapeptide onto the lipid carrier undecaprenyl phosphate, yielding undecaprenyl-pyrophosphoryl-MurNAc-pentapeptide, known as lipid I. The protein is Phospho-N-acetylmuramoyl-pentapeptide-transferase of Latilactobacillus sakei subsp. sakei (strain 23K) (Lactobacillus sakei subsp. sakei).